The sequence spans 454 residues: Growth/differentiation factor 6 (454 aa).

Positions 1–22 (MDTPRVLLWAIFLISFLWDLPG) are cleaved as a signal peptide. A propeptide spanning residues 23 to 334 (FQQASISSSS…LPSPGRRRRR (312 aa)) is cleaved from the precursor. The interval 28–93 (ISSSSSSSTE…QGQEPPGRGL (66 aa)) is disordered. Basic and acidic residues-rich tracts occupy residues 39-52 (DSTK…EGKM) and 60-73 (AEGR…LRQK). The span at 81 to 92 (GQHQGQEPPGRG) shows a compositional bias: low complexity. N-linked (GlcNAc...) asparagine glycosylation occurs at N117. Disordered stretches follow at residues 247–268 (DTGA…SLGF) and 303–350 (AEAA…KKSR). Over residues 303–319 (AEAAGAEGSWPAPSGSP) the composition is skewed to low complexity. Residues 329-350 (GRRRRRTAFASRHGKRHGKKSR) show a composition bias toward basic residues. 3 cysteine pairs are disulfide-bonded: C353–C419, C382–C451, and C386–C453.

It belongs to the TGF-beta family. Homodimer; disulfide-linked. In terms of tissue distribution, expressed in different subsets of developing joints. Highly expressed in the cochlea.

Its subcellular location is the secreted. Growth factor that controls proliferation and cellular differentiation in the retina and bone formation. Plays a key role in regulating apoptosis during retinal development. Establishes dorsal-ventral positional information in the retina and controls the formation of the retinotectal map. Required for normal formation of bones and joints in the limbs, skull, digits and axial skeleton. Plays a key role in establishing boundaries between skeletal elements during development. Regulation of GDF6 expression seems to be a mechanism for evolving species-specific changes in skeletal structures. Seems to positively regulate differentiation of chondrogenic tissue through the growth factor receptors subunits BMPR1A, BMPR1B, BMPR2 and ACVR2A, leading to the activation of SMAD1-SMAD5-SMAD8 complex. The regulation of chondrogenic differentiation is inhibited by NOG. Also involved in the induction of adipogenesis from mesenchymal stem cells. This mechanism acts through the growth factor receptors subunits BMPR1A, BMPR2 and ACVR2A and the activation of SMAD1-SMAD5-SMAD8 complex and MAPK14/p38. The protein is Growth/differentiation factor 6 (Gdf6) of Mus musculus (Mouse).